A 368-amino-acid polypeptide reads, in one-letter code: Phospho-N-acetylmuramoyl-pentapeptide-transferase (368 aa).

9 helical membrane passes run 30-50 (AAAITALLITLLIGPKLIAYL), 72-92 (LPTMGGLLIIFAFELSVFLWA), 99-119 (VWLVMVAVLWMGAVGFLDDYL), 135-155 (LIGQVLLGLLVGLYAWFDPSM), 170-190 (LTINYGIFYVPVVIFIITAIS), 201-221 (GLAAGTSAIAFIGLAGFAYLA), 238-258 (GGEVAIVSMALVMACVGFLWF), 265-286 (IIMGDTGSLALGSAMAVIALLI), and 345-365 (KIVIRFWIMAILFFLASLMTL).

The protein belongs to the glycosyltransferase 4 family. MraY subfamily. Mg(2+) serves as cofactor.

It is found in the cell inner membrane. The catalysed reaction is UDP-N-acetyl-alpha-D-muramoyl-L-alanyl-gamma-D-glutamyl-meso-2,6-diaminopimeloyl-D-alanyl-D-alanine + di-trans,octa-cis-undecaprenyl phosphate = di-trans,octa-cis-undecaprenyl diphospho-N-acetyl-alpha-D-muramoyl-L-alanyl-D-glutamyl-meso-2,6-diaminopimeloyl-D-alanyl-D-alanine + UMP. Its pathway is cell wall biogenesis; peptidoglycan biosynthesis. Functionally, catalyzes the initial step of the lipid cycle reactions in the biosynthesis of the cell wall peptidoglycan: transfers peptidoglycan precursor phospho-MurNAc-pentapeptide from UDP-MurNAc-pentapeptide onto the lipid carrier undecaprenyl phosphate, yielding undecaprenyl-pyrophosphoryl-MurNAc-pentapeptide, known as lipid I. The protein is Phospho-N-acetylmuramoyl-pentapeptide-transferase of Chlorobium chlorochromatii (strain CaD3).